Reading from the N-terminus, the 431-residue chain is Serine hydroxymethyltransferase 2 (431 aa).

(6S)-5,6,7,8-tetrahydrofolate is bound by residues L131 and G135–L137. Residue K240 is modified to N6-(pyridoxal phosphate)lysine.

This sequence belongs to the SHMT family. In terms of assembly, homodimer. Pyridoxal 5'-phosphate serves as cofactor.

It localises to the cytoplasm. It catalyses the reaction (6R)-5,10-methylene-5,6,7,8-tetrahydrofolate + glycine + H2O = (6S)-5,6,7,8-tetrahydrofolate + L-serine. It functions in the pathway one-carbon metabolism; tetrahydrofolate interconversion. Its pathway is amino-acid biosynthesis; glycine biosynthesis; glycine from L-serine: step 1/1. Functionally, catalyzes the reversible interconversion of serine and glycine with tetrahydrofolate (THF) serving as the one-carbon carrier. This reaction serves as the major source of one-carbon groups required for the biosynthesis of purines, thymidylate, methionine, and other important biomolecules. Also exhibits THF-independent aldolase activity toward beta-hydroxyamino acids, producing glycine and aldehydes, via a retro-aldol mechanism. This chain is Serine hydroxymethyltransferase 2, found in Photobacterium profundum (strain SS9).